The following is a 273-amino-acid chain: Putative phosphoenolpyruvate synthase regulatory protein (273 aa).

An ADP-binding site is contributed by 154 to 161 (GVSRSGKT).

It belongs to the pyruvate, phosphate/water dikinase regulatory protein family. PSRP subfamily.

The enzyme catalyses [pyruvate, water dikinase] + ADP = [pyruvate, water dikinase]-phosphate + AMP + H(+). It carries out the reaction [pyruvate, water dikinase]-phosphate + phosphate + H(+) = [pyruvate, water dikinase] + diphosphate. In terms of biological role, bifunctional serine/threonine kinase and phosphorylase involved in the regulation of the phosphoenolpyruvate synthase (PEPS) by catalyzing its phosphorylation/dephosphorylation. In Neisseria gonorrhoeae (strain ATCC 700825 / FA 1090), this protein is Putative phosphoenolpyruvate synthase regulatory protein.